The sequence spans 524 residues: Glucose-6-phosphate 1-dehydrogenase (524 aa).

S20 bears the Phosphoserine mark. Residues 42–49 (GASGDLAK), R76, and K175 contribute to the NADP(+) site. Residues K175, 205–209 (HYLGK), E243, and D262 each bind D-glucose 6-phosphate. H267 serves as the catalytic Proton acceptor. NADP(+) is bound at residue R362. D-glucose 6-phosphate-binding residues include K365 and R370. 3 residues coordinate NADP(+): K371, R375, and R398. Position 400 (Q400) interacts with D-glucose 6-phosphate. Residues 406 to 408 (YFK), 426 to 428 (DLT), R492, Y508, and W514 each bind NADP(+).

It belongs to the glucose-6-phosphate dehydrogenase family.

It is found in the cytoplasm. The protein localises to the cytosol. It carries out the reaction D-glucose 6-phosphate + NADP(+) = 6-phospho-D-glucono-1,5-lactone + NADPH + H(+). It functions in the pathway carbohydrate degradation; pentose phosphate pathway; D-ribulose 5-phosphate from D-glucose 6-phosphate (oxidative stage): step 1/3. In terms of biological role, cytosolic glucose-6-phosphate dehydrogenase that catalyzes the first and rate-limiting step of the oxidative branch within the pentose phosphate pathway/shunt, an alternative route to glycolysis for the dissimilation of carbohydrates and a major source of reducing power and metabolic intermediates for fatty acid and nucleic acid biosynthetic processes. This Drosophila melanogaster (Fruit fly) protein is Glucose-6-phosphate 1-dehydrogenase.